The following is a 102-amino-acid chain: Small ribosomal subunit protein uS10m (102 aa).

Belongs to the universal ribosomal protein uS10 family.

The protein localises to the mitochondrion. The polypeptide is Small ribosomal subunit protein uS10m (RPS10) (Marchantia polymorpha (Common liverwort)).